Reading from the N-terminus, the 177-residue chain is MFHATTILAYKGKNKAVIGGDGQVSFGNTVLKGNAVKIRKIHNGKVLAGFAGSTADAFNLFDMFEKNLEHTKGDLLKAVIEFSKEWRKDKYLRKLEAMMLVLDRDKIFLLSGTGDVVEPEDGKIAAIGSGGNYALSAARALDKFADIDEEELVKESLKIAGEICIYTNTNIKTYVLE.

Thr-5 is an active-site residue. Gly-161, Cys-164, and Thr-167 together coordinate Na(+).

This sequence belongs to the peptidase T1B family. HslV subfamily. A double ring-shaped homohexamer of HslV is capped on each side by a ring-shaped HslU homohexamer. The assembly of the HslU/HslV complex is dependent on binding of ATP.

It localises to the cytoplasm. The catalysed reaction is ATP-dependent cleavage of peptide bonds with broad specificity.. Allosterically activated by HslU binding. Functionally, protease subunit of a proteasome-like degradation complex believed to be a general protein degrading machinery. This chain is ATP-dependent protease subunit HslV, found in Campylobacter concisus (strain 13826).